A 185-amino-acid polypeptide reads, in one-letter code: Intraflagellar transport protein 22 homolog (185 aa).

GTP contacts are provided by residues 10–17, 63–67, and 123–126; these read GPCESGKT, DCGGD, and HKPG. Serine 137 bears the Phosphoserine mark.

This sequence belongs to the small GTPase superfamily. Rab family. Component of the IFT complex B, at least composed of IFT20, IFT22, IFT25, IFT27, IFT46, IFT52, TRAF3IP1/IFT54, IFT57, IFT74, IFT80, IFT81, and IFT88. Interacts with IFT88. Interacts with CFAP61.

It localises to the cell projection. The protein localises to the cilium. Small GTPase-like component of the intraflagellar transport (IFT) complex B. The protein is Intraflagellar transport protein 22 homolog (IFT22) of Homo sapiens (Human).